The chain runs to 309 residues: Homoserine O-succinyltransferase (309 aa).

The active-site Acyl-thioester intermediate is Cys-142. 2 residues coordinate substrate: Lys-163 and Ser-192. His-235 serves as the catalytic Proton acceptor. Residue Glu-237 is part of the active site. A substrate-binding site is contributed by Arg-249.

Belongs to the MetA family.

It is found in the cytoplasm. The enzyme catalyses L-homoserine + succinyl-CoA = O-succinyl-L-homoserine + CoA. Its pathway is amino-acid biosynthesis; L-methionine biosynthesis via de novo pathway; O-succinyl-L-homoserine from L-homoserine: step 1/1. In terms of biological role, transfers a succinyl group from succinyl-CoA to L-homoserine, forming succinyl-L-homoserine. This chain is Homoserine O-succinyltransferase, found in Yersinia enterocolitica serotype O:8 / biotype 1B (strain NCTC 13174 / 8081).